Consider the following 422-residue polypeptide: Histidine--tRNA ligase (422 aa).

This sequence belongs to the class-II aminoacyl-tRNA synthetase family. Homodimer.

Its subcellular location is the cytoplasm. It catalyses the reaction tRNA(His) + L-histidine + ATP = L-histidyl-tRNA(His) + AMP + diphosphate + H(+). This is Histidine--tRNA ligase from Ruthia magnifica subsp. Calyptogena magnifica.